Here is a 1016-residue protein sequence, read N- to C-terminus: Formate dehydrogenase-O major subunit (1016 aa).

Residues 1–33 (MQVSRRQFFKICAGGMAGTTAAALGFAPSVALA) constitute a signal peptide (tat-type signal). The region spanning 43-106 (TRETRNTCTY…GLVDFIHSES (64 aa)) is the 4Fe-4S Mo/W bis-MGD-type domain. [4Fe-4S] cluster contacts are provided by cysteine 50, cysteine 53, cysteine 57, and cysteine 92. Selenocysteine 196 is a non-standard amino acid (selenocysteine).

The protein belongs to the prokaryotic molybdopterin-containing oxidoreductase family. Formate dehydrogenase is a membrane-bound complex, formed by subunits alpha, beta and gamma. Mo-bis(molybdopterin guanine dinucleotide) serves as cofactor. The cofactor is [4Fe-4S] cluster. Post-translationally, exported by the Tat system. The position of the signal peptide cleavage has not been experimentally proven.

It localises to the periplasm. The enzyme catalyses formate + NAD(+) = CO2 + NADH. In terms of biological role, allows to use formate as major electron donor during aerobic respiration. Subunit alpha possibly forms the active site. The sequence is that of Formate dehydrogenase-O major subunit (fdoG) from Escherichia coli (strain K12).